The following is a 443-amino-acid chain: Ribosomal protein uS12 methylthiotransferase RimO (443 aa).

The region spanning 10–120 (PRVGFVSLGC…VMQAVHRHLP (111 aa)) is the MTTase N-terminal domain. 6 residues coordinate [4Fe-4S] cluster: cysteine 19, cysteine 55, cysteine 84, cysteine 151, cysteine 155, and cysteine 158. One can recognise a Radical SAM core domain in the interval 137–375 (LTPQHYAYLK…DFQEDISTQR (239 aa)). Positions 377–443 (EAKIGREMTV…IHDLYAERVV (67 aa)) constitute a TRAM domain.

The protein belongs to the methylthiotransferase family. RimO subfamily. Requires [4Fe-4S] cluster as cofactor.

The protein localises to the cytoplasm. The enzyme catalyses L-aspartate(89)-[ribosomal protein uS12]-hydrogen + (sulfur carrier)-SH + AH2 + 2 S-adenosyl-L-methionine = 3-methylsulfanyl-L-aspartate(89)-[ribosomal protein uS12]-hydrogen + (sulfur carrier)-H + 5'-deoxyadenosine + L-methionine + A + S-adenosyl-L-homocysteine + 2 H(+). Functionally, catalyzes the methylthiolation of an aspartic acid residue of ribosomal protein uS12. The polypeptide is Ribosomal protein uS12 methylthiotransferase RimO (Azoarcus sp. (strain BH72)).